The sequence spans 366 residues: Phospho-N-acetylmuramoyl-pentapeptide-transferase (366 aa).

The next 10 membrane-spanning stretches (helical) occupy residues 27 to 47 (AALF…IASL), 71 to 91 (TPTM…LLWA), 93 to 113 (LSSI…AIGF), 138 to 158 (FVIA…AGAA), 174 to 194 (LMLN…VGAG), 205 to 225 (GLAI…AYLA), 245 to 265 (LAVI…FNAP), 268 to 288 (AIFM…TVAV), 297 to 317 (IIIG…VFWF), and 343 to 363 (QVVI…LSTL).

This sequence belongs to the glycosyltransferase 4 family. MraY subfamily. It depends on Mg(2+) as a cofactor.

Its subcellular location is the cell inner membrane. It carries out the reaction UDP-N-acetyl-alpha-D-muramoyl-L-alanyl-gamma-D-glutamyl-meso-2,6-diaminopimeloyl-D-alanyl-D-alanine + di-trans,octa-cis-undecaprenyl phosphate = di-trans,octa-cis-undecaprenyl diphospho-N-acetyl-alpha-D-muramoyl-L-alanyl-D-glutamyl-meso-2,6-diaminopimeloyl-D-alanyl-D-alanine + UMP. Its pathway is cell wall biogenesis; peptidoglycan biosynthesis. Functionally, catalyzes the initial step of the lipid cycle reactions in the biosynthesis of the cell wall peptidoglycan: transfers peptidoglycan precursor phospho-MurNAc-pentapeptide from UDP-MurNAc-pentapeptide onto the lipid carrier undecaprenyl phosphate, yielding undecaprenyl-pyrophosphoryl-MurNAc-pentapeptide, known as lipid I. The polypeptide is Phospho-N-acetylmuramoyl-pentapeptide-transferase (Rhizobium meliloti (strain 1021) (Ensifer meliloti)).